A 380-amino-acid polypeptide reads, in one-letter code: Cytochrome b (380 aa).

4 consecutive transmembrane segments (helical) span residues 33–53 (FGSL…FLAM), 77–98 (WLIR…YLHI), 113–133 (WNVG…GYVL), and 178–198 (FFAF…IHLI). Residues His83 and His97 each coordinate heme b. Heme b contacts are provided by His182 and His196. His201 is a binding site for a ubiquinone. 4 consecutive transmembrane segments (helical) span residues 226–246 (YKDL…ALFS), 288–308 (LGGV…PILH), 320–340 (FSQF…WIGG), and 347–367 (FVII…VMIP).

Belongs to the cytochrome b family. The cytochrome bc1 complex contains 3 respiratory subunits (MT-CYB, CYC1 and UQCRFS1), 2 core proteins (UQCRC1 and UQCRC2) and probably 6 low-molecular weight proteins. The cofactor is heme b.

It localises to the mitochondrion inner membrane. Component of the ubiquinol-cytochrome c reductase complex (complex III or cytochrome b-c1 complex) that is part of the mitochondrial respiratory chain. The b-c1 complex mediates electron transfer from ubiquinol to cytochrome c. Contributes to the generation of a proton gradient across the mitochondrial membrane that is then used for ATP synthesis. The protein is Cytochrome b (mt-cyb) of Paralichthys olivaceus (Bastard halibut).